We begin with the raw amino-acid sequence, 283 residues long: ACT domain-containing protein DS12, chloroplastic (283 aa).

Residues 1-56 constitute a chloroplast transit peptide; the sequence is MAEMAVTAALRPCSGVSPAVSGTSHRRRRPAAWRALAPPPPHAGLRLSSPAVRVPR. The segment at 14–78 is disordered; sequence SGVSPAVSGT…SNTDTVPTPK (65 aa). Residues 48 to 63 show a composition bias toward low complexity; sequence SSPAVRVPRAASSAAV. ACT domains are found at residues 91 to 171 and 206 to 276; these read IVEI…ASSQ and LLVV…LRRP.

The protein resides in the plastid. It localises to the chloroplast. This chain is ACT domain-containing protein DS12, chloroplastic, found in Oryza sativa subsp. indica (Rice).